Here is a 307-residue protein sequence, read N- to C-terminus: Glycine--tRNA ligase alpha subunit (307 aa).

It belongs to the class-II aminoacyl-tRNA synthetase family. In terms of assembly, tetramer of two alpha and two beta subunits.

It is found in the cytoplasm. It catalyses the reaction tRNA(Gly) + glycine + ATP = glycyl-tRNA(Gly) + AMP + diphosphate. This chain is Glycine--tRNA ligase alpha subunit, found in Levilactobacillus brevis (strain ATCC 367 / BCRC 12310 / CIP 105137 / JCM 1170 / LMG 11437 / NCIMB 947 / NCTC 947) (Lactobacillus brevis).